The primary structure comprises 748 residues: Catalase-peroxidase (748 aa).

Positions 96 to 229 form a cross-link, tryptophyl-tyrosyl-methioninium (Trp-Tyr) (with M-255); that stretch reads WHSAGTYRVA…LAAAHMGLIY (134 aa). His97 functions as the Proton acceptor in the catalytic mechanism. Positions 229–255 form a cross-link, tryptophyl-tyrosyl-methioninium (Tyr-Met) (with W-96); that stretch reads YVNPEGPDGNPDPIAAAKDIRTTFGRM. Heme b is bound at residue His270.

Belongs to the peroxidase family. Peroxidase/catalase subfamily. In terms of assembly, homodimer or homotetramer. Requires heme b as cofactor. Post-translationally, formation of the three residue Trp-Tyr-Met cross-link is important for the catalase, but not the peroxidase activity of the enzyme.

Its subcellular location is the cytoplasm. It catalyses the reaction H2O2 + AH2 = A + 2 H2O. The catalysed reaction is 2 H2O2 = O2 + 2 H2O. Bifunctional enzyme with both catalase and broad-spectrum peroxidase activity. Plays a crucial role in oxidative stress response during infection. Acts as an antigen and elicits antibody response in P.marneffei-infected AIDS patients, healthy people working in mycological laboratory, and healthy people in an endemic area. The sequence is that of Catalase-peroxidase from Talaromyces marneffei (Penicillium marneffei).